Consider the following 402-residue polypeptide: B box and SPRY domain-containing protein (402 aa).

The segment at 1 to 20 is disordered; sequence MSAEGAEPGPGSGSGPGPGP. The B box-type zinc-finger motif lies at 17–65; sequence GPGPLCPEHGQALSWFCGSERRPVCAACAGLGGRCRGHRIRRAEERAEE. The B30.2/SPRY domain occupies 212 to 402; sequence PLLTQLWATA…VADQTISIVR (191 aa).

Interacts with TRPV5 and TRPV6. Interacts with YWHAZ/14-3-3 protein zeta.

It localises to the cytoplasm. It is found in the membrane. In terms of biological role, may regulate epithelial calcium transport by inhibiting TRPV5 activity. This Homo sapiens (Human) protein is B box and SPRY domain-containing protein (BSPRY).